A 382-amino-acid chain; its full sequence is D-galactonate dehydratase (382 aa).

Aspartate 183 contacts Mg(2+). Histidine 185 (proton donor) is an active-site residue. Residues glutamate 209 and glutamate 235 each coordinate Mg(2+). Histidine 285 functions as the Proton acceptor in the catalytic mechanism.

The protein belongs to the mandelate racemase/muconate lactonizing enzyme family. GalD subfamily. The cofactor is Mg(2+).

The catalysed reaction is D-galactonate = 2-dehydro-3-deoxy-D-galactonate + H2O. Its pathway is carbohydrate acid metabolism; D-galactonate degradation; D-glyceraldehyde 3-phosphate and pyruvate from D-galactonate: step 1/3. Its function is as follows. Catalyzes the dehydration of D-galactonate to 2-keto-3-deoxy-D-galactonate. The chain is D-galactonate dehydratase from Cronobacter sakazakii (strain ATCC BAA-894) (Enterobacter sakazakii).